Reading from the N-terminus, the 38-residue chain is Large ribosomal subunit protein bL36 (38 aa).

It belongs to the bacterial ribosomal protein bL36 family.

The protein is Large ribosomal subunit protein bL36 of Fervidobacterium nodosum (strain ATCC 35602 / DSM 5306 / Rt17-B1).